We begin with the raw amino-acid sequence, 425 residues long: Tyrosine--tRNA ligase (425 aa).

Y34 contributes to the L-tyrosine binding site. Positions 39-48 (PTADSLHVGN) match the 'HIGH' region motif. L-tyrosine-binding residues include Y171 and Q175. The short motif at 231 to 235 (KYGKS) is the 'KMSKS' region element. K234 is a binding site for ATP. An S4 RNA-binding domain is found at 358-424 (APLVELLVHA…GKRTYTVVKI (67 aa)).

This sequence belongs to the class-I aminoacyl-tRNA synthetase family. TyrS type 1 subfamily. As to quaternary structure, homodimer.

It is found in the cytoplasm. It catalyses the reaction tRNA(Tyr) + L-tyrosine + ATP = L-tyrosyl-tRNA(Tyr) + AMP + diphosphate + H(+). Functionally, catalyzes the attachment of tyrosine to tRNA(Tyr) in a two-step reaction: tyrosine is first activated by ATP to form Tyr-AMP and then transferred to the acceptor end of tRNA(Tyr). The polypeptide is Tyrosine--tRNA ligase (Opitutus terrae (strain DSM 11246 / JCM 15787 / PB90-1)).